The following is a 270-amino-acid chain: Tetraspanin-18 (270 aa).

Residues M1–K15 lie on the Cytoplasmic side of the membrane. The helical transmembrane segment at I16–L36 threads the bilayer. Residues H37–W99 are Extracellular-facing. A helical transmembrane segment spans residues F100–I120. Over A121–F132 the chain is Cytoplasmic. A helical membrane pass occupies residues Y133 to I153. Over D154 to C183 the chain is Extracellular. Residues K184–L204 traverse the membrane as a helical segment. The Cytoplasmic segment spans residues R205–G270. The disordered stretch occupies residues K212–N249. The span at Q236–N249 shows a compositional bias: polar residues. S245 carries the phosphoserine modification.

The protein belongs to the tetraspanin (TM4SF) family. In terms of assembly, homodimer. Constituent of tobamovirus replication complex. Expressed in rosette leaves.

The protein localises to the membrane. It localises to the vacuole membrane. May be involved in the regulation of cell differentiation. Functionally, promotes intracellular multiplication of tobamoviruses, probably being a component of the replication complex. The chain is Tetraspanin-18 (TOM2AH2) from Arabidopsis thaliana (Mouse-ear cress).